The following is a 331-amino-acid chain: 2-keto-3-deoxygluconate permease (331 aa).

Helical transmembrane passes span 10–30 (IPGGMMLVPLVLGAILNTLAP), 42–62 (GMISGTVPILAVWFFCIGASI), 77–97 (LVLTKIAVAWVVAMGCAMFIP), 100–120 (GIQTGFFAGLSVLAIVSAMDM), 141–161 (AFVLMSLESGPLVTMLILGSA), 163–183 (LASFEPHHFVGAVLPFLIGFA), 200–220 (PVLIPFFGFALGNTINLNVIM), 224–244 (LLGIVLGVAVIIITGIPLIIA), 254–274 (TAGVAASSAAGAAVANPMIIA), and 289–309 (ALVAASVIVTAILVPIITALY).

The protein belongs to the KdgT transporter family.

It is found in the cell inner membrane. The enzyme catalyses 2-dehydro-3-deoxy-D-gluconate(in) + H(+)(in) = 2-dehydro-3-deoxy-D-gluconate(out) + H(+)(out). Its function is as follows. Catalyzes the proton-dependent uptake of 2-keto-3-deoxygluconate (KDG) into the cell. The sequence is that of 2-keto-3-deoxygluconate permease from Enterobacter sp. (strain 638).